Reading from the N-terminus, the 70-residue chain is Protein SlyX homolog (70 aa).

It belongs to the SlyX family.

The chain is Protein SlyX homolog from Shewanella sp. (strain MR-4).